Reading from the N-terminus, the 518-residue chain is Anthranilate synthase component 1 (518 aa).

Residues serine 38 and 283-285 each bind L-tryptophan; that span reads PYM. 324–325 is a binding site for chorismate; the sequence is GT. Residue glutamate 357 coordinates Mg(2+). Chorismate contacts are provided by residues tyrosine 445, arginine 465, 479–481, and glycine 481; that span reads GAG. A Mg(2+)-binding site is contributed by glutamate 494.

It belongs to the anthranilate synthase component I family. As to quaternary structure, heterotetramer consisting of two non-identical subunits: a beta subunit (TrpG) and a large alpha subunit (TrpE). It depends on Mg(2+) as a cofactor.

It catalyses the reaction chorismate + L-glutamine = anthranilate + pyruvate + L-glutamate + H(+). Its pathway is amino-acid biosynthesis; L-tryptophan biosynthesis; L-tryptophan from chorismate: step 1/5. Feedback inhibited by tryptophan. Part of a heterotetrameric complex that catalyzes the two-step biosynthesis of anthranilate, an intermediate in the biosynthesis of L-tryptophan. In the first step, the glutamine-binding beta subunit (TrpG) of anthranilate synthase (AS) provides the glutamine amidotransferase activity which generates ammonia as a substrate that, along with chorismate, is used in the second step, catalyzed by the large alpha subunit of AS (TrpE) to produce anthranilate. In the absence of TrpG, TrpE can synthesize anthranilate directly from chorismate and high concentrations of ammonia. The protein is Anthranilate synthase component 1 (trpE) of Corynebacterium glutamicum (strain ATCC 13032 / DSM 20300 / JCM 1318 / BCRC 11384 / CCUG 27702 / LMG 3730 / NBRC 12168 / NCIMB 10025 / NRRL B-2784 / 534).